A 132-amino-acid polypeptide reads, in one-letter code: Small ribosomal subunit protein eS6 (132 aa).

It belongs to the eukaryotic ribosomal protein eS6 family.

This chain is Small ribosomal subunit protein eS6, found in Methanoculleus marisnigri (strain ATCC 35101 / DSM 1498 / JR1).